We begin with the raw amino-acid sequence, 631 residues long: Mitochondrial Rho GTPase 1 (631 aa).

The Cytoplasmic segment spans residues 1 to 605; the sequence is MPAGRGRPLR…TQADLKSSTF (605 aa). A Miro 1 domain is found at 15-181; it reads KKDVRILLVG…FYYAQKAVLH (167 aa). The GTP site is built by Arg-27, Gly-29, Lys-30, Thr-31, and Ser-32. Thr-31 contributes to the Mg(2+) binding site. Positions 48 and 70 each coordinate Mg(2+). Ser-72 serves as a coordination point for GTP. Lys-105 is subject to N6-acetyllysine. GTP-binding residues include Asn-131, Lys-132, Asp-134, Ala-162, and Lys-163. Residue Lys-166 forms a Glycyl lysine isopeptide (Lys-Gly) (interchain with G-Cter in ubiquitin) linkage. An EF-hand 1 domain is found at 197 to 232; it reads ACIKALTRIFKISDQDNDGTLNDAELNFFQRICFNT. Ca(2+) is bound by residues Asp-210, Asp-212, Asp-214, Thr-216, and Glu-221. Residue Lys-248 forms a Glycyl lysine isopeptide (Lys-Gly) (interchain with G-Cter in ubiquitin) linkage. Positions 317–352 constitute an EF-hand 2 domain; that stretch reads HAYLFLQSTFDKHDLDRDCALSPDELKDLFKVFPYI. Ca(2+) contacts are provided by Asp-330, Asp-332, Asp-334, Ala-336, and Glu-341. Residues 429–592 enclose the Miro 2 domain; it reads RNVFRCNVIG…FVKLTTMAMY (164 aa). Residues Asn-441, Cys-442, Gly-443, Lys-444, Ser-445, Gly-446, Lys-460, Lys-541, Asp-543, Thr-571, and Cys-572 each coordinate GTP. A Mg(2+)-binding site is contributed by Asn-441. Residue Lys-585 forms a Glycyl lysine isopeptide (Lys-Gly) (interchain with G-Cter in ubiquitin) linkage. A helical; Anchor for type IV membrane protein membrane pass occupies residues 606–628; sequence WLRASFGATVFAVLGFAMYKALL. Topologically, residues 629–631 are mitochondrial intermembrane; sequence KQR.

This sequence belongs to the mitochondrial Rho GTPase family. Homodimer. Interacts with the kinesin-binding proteins TRAK1/OIP106 and TRAK2/GRIF1, forming a link between mitochondria and the trafficking apparatus of the microtubules. Interacts with RAP1GDS1. Interacts with ARMCX1. Found in a complex with KIF5B, OGT, RHOT2 and TRAK1. Ubiquitinated by PRKN during mitophagy, leading to its degradation and enhancement of mitophagy. Deubiquitinated by USP30. Post-translationally, acetylation on Lys-105 decreases sensitivity of mitochondrial transport to elevated Ca(2+) levels, increases mitochondrial transport and promotes axon growth. Deacetylated by HDAC6 which blocks mitochondrial transport and mediates axon growth inhibition.

Its subcellular location is the mitochondrion outer membrane. It carries out the reaction GTP + H2O = GDP + phosphate + H(+). The catalysed reaction is ATP + H2O = ADP + phosphate + H(+). It catalyses the reaction UTP + H2O = UDP + phosphate + H(+). In terms of biological role, atypical mitochondrial nucleoside-triphosphatase (NTPase) involved in mitochondrial trafficking. Probably involved in control of anterograde transport of mitochondria and their subcellular distribution. Promotes mitochondrial fission during high calcium conditions. Can hydrolyze GTP, ATP and UTP. This is Mitochondrial Rho GTPase 1 (RHOT1) from Bos taurus (Bovine).